The chain runs to 428 residues: Adenylosuccinate synthetase (428 aa).

Residues 12-18 and 40-42 contribute to the GTP site; these read GDEGKGK and GHT. The active-site Proton acceptor is Asp13. Mg(2+) contacts are provided by Asp13 and Gly40. Residues 13–16, 38–41, Thr127, Arg141, Gln222, Thr237, and Arg301 contribute to the IMP site; these read DEGK and NAGH. The Proton donor role is filled by His41. 297–303 is a substrate binding site; it reads TVTKRPR. GTP-binding positions include Arg303, 329–331, and 411–413; these read CLD and SVG.

Belongs to the adenylosuccinate synthetase family. In terms of assembly, homodimer. Mg(2+) serves as cofactor.

It is found in the cytoplasm. It catalyses the reaction IMP + L-aspartate + GTP = N(6)-(1,2-dicarboxyethyl)-AMP + GDP + phosphate + 2 H(+). It functions in the pathway purine metabolism; AMP biosynthesis via de novo pathway; AMP from IMP: step 1/2. In terms of biological role, plays an important role in the de novo pathway of purine nucleotide biosynthesis. Catalyzes the first committed step in the biosynthesis of AMP from IMP. The protein is Adenylosuccinate synthetase of Levilactobacillus brevis (strain ATCC 367 / BCRC 12310 / CIP 105137 / JCM 1170 / LMG 11437 / NCIMB 947 / NCTC 947) (Lactobacillus brevis).